The chain runs to 465 residues: ATP-dependent protease ATPase subunit HslU (465 aa).

ATP is bound by residues valine 18, 60–65 (GVGKTE), aspartate 277, glutamate 342, and arginine 414.

The protein belongs to the ClpX chaperone family. HslU subfamily. In terms of assembly, a double ring-shaped homohexamer of HslV is capped on each side by a ring-shaped HslU homohexamer. The assembly of the HslU/HslV complex is dependent on binding of ATP.

It is found in the cytoplasm. Functionally, ATPase subunit of a proteasome-like degradation complex; this subunit has chaperone activity. The binding of ATP and its subsequent hydrolysis by HslU are essential for unfolding of protein substrates subsequently hydrolyzed by HslV. HslU recognizes the N-terminal part of its protein substrates and unfolds these before they are guided to HslV for hydrolysis. This chain is ATP-dependent protease ATPase subunit HslU, found in Caldicellulosiruptor saccharolyticus (strain ATCC 43494 / DSM 8903 / Tp8T 6331).